The following is a 158-amino-acid chain: Ribosome maturation factor RimP (158 aa).

Belongs to the RimP family.

It is found in the cytoplasm. In terms of biological role, required for maturation of 30S ribosomal subunits. This Lactobacillus delbrueckii subsp. bulgaricus (strain ATCC 11842 / DSM 20081 / BCRC 10696 / JCM 1002 / NBRC 13953 / NCIMB 11778 / NCTC 12712 / WDCM 00102 / Lb 14) protein is Ribosome maturation factor RimP.